Consider the following 572-residue polypeptide: Probable D-xylulose kinase A (572 aa).

Substrate is bound by residues H95, R166, D282, and N283. ATP is bound by residues W365, G470 to G471, and N474.

This sequence belongs to the FGGY kinase family.

The protein resides in the cytoplasm. It carries out the reaction D-xylulose + ATP = D-xylulose 5-phosphate + ADP + H(+). In terms of biological role, highly specific D-xylulose kinase which participates in the catabolism of xylose. Xylose is a major component of hemicelluloses such as xylan. Most fungi utilize D-xylose via three enzymatic reactions, xylose reductase (XR), xylitol dehydrogenase (XDH), and xylulokinase, to form xylulose 5-phosphate, which enters pentose phosphate pathway. The sequence is that of Probable D-xylulose kinase A (xkiA) from Aspergillus flavus (strain ATCC 200026 / FGSC A1120 / IAM 13836 / NRRL 3357 / JCM 12722 / SRRC 167).